The following is a 240-amino-acid chain: CRISPR-associated protein Cas5 3 (240 aa).

It belongs to the CRISPR-associated protein Cas5 family. Subtype I-A/Apern subfamily. As to quaternary structure, part of the aCascade ribonucleoprotein complex.

Its function is as follows. CRISPR (clustered regularly interspaced short palindromic repeat) is an adaptive immune system that provides protection against mobile genetic elements (viruses, transposable elements and conjugative plasmids). CRISPR clusters contain spacers, sequences complementary to antecedent mobile elements, and target invading nucleic acids. CRISPR clusters are transcribed and processed into CRISPR RNA (crRNA). This chain is CRISPR-associated protein Cas5 3 (cas5c), found in Saccharolobus solfataricus (strain ATCC 35092 / DSM 1617 / JCM 11322 / P2) (Sulfolobus solfataricus).